Here is an 89-residue protein sequence, read N- to C-terminus: Small ribosomal subunit protein uS15 (89 aa).

Belongs to the universal ribosomal protein uS15 family. In terms of assembly, part of the 30S ribosomal subunit. Forms a bridge to the 50S subunit in the 70S ribosome, contacting the 23S rRNA.

In terms of biological role, one of the primary rRNA binding proteins, it binds directly to 16S rRNA where it helps nucleate assembly of the platform of the 30S subunit by binding and bridging several RNA helices of the 16S rRNA. Functionally, forms an intersubunit bridge (bridge B4) with the 23S rRNA of the 50S subunit in the ribosome. This Bartonella henselae (strain ATCC 49882 / DSM 28221 / CCUG 30454 / Houston 1) (Rochalimaea henselae) protein is Small ribosomal subunit protein uS15.